The following is a 464-amino-acid chain: Alpha-1,6-mannosyl-glycoprotein 4-beta-N-acetylglucosaminyltransferase (464 aa).

At methionine 1–threonine 10 the chain is on the cytoplasmic side. A helical; Signal-anchor for type II membrane protein membrane pass occupies residues alanine 11–tryptophan 31. Topologically, residues glutamine 32 to threonine 464 are lumenal. 2 N-linked (GlcNAc...) asparagine glycosylation sites follow: asparagine 70 and asparagine 201.

This sequence belongs to the glycosyltransferase 54 family. Requires a divalent metal cation as cofactor. As to expression, highly expressed in oviduct, spleen, lung and colon.

Its subcellular location is the golgi apparatus membrane. The enzyme catalyses N(4)-{beta-D-GlcNAc-(1-&gt;2)-[beta-D-GlcNAc-(1-&gt;4)]-alpha-D-Man-(1-&gt;3)-[beta-D-GlcNAc-(1-&gt;2)-[beta-D-GlcNAc-(1-&gt;6)]-alpha-D-Man-(1-&gt;6)]-beta-D-Man-(1-&gt;4)-beta-D-GlcNAc-(1-&gt;4)-beta-D-GlcNAc}-L-asparaginyl-[protein] + UDP-N-acetyl-alpha-D-glucosamine = N(4)-{beta-D-GlcNAc-(1-&gt;2)-[beta-D-GlcNAc-(1-&gt;4)]-alpha-D-Man-(1-&gt;3)-[beta-D-GlcNAc-(1-&gt;2)-[beta-D-GlcNAc-(1-&gt;4)]-[beta-D-GlcNAc-(1-&gt;6)]-alpha-D-Man-(1-&gt;6)]-beta-D-Man-(1-&gt;4)-beta-D-GlcNAc-(1-&gt;4)-beta-D-GlcNAc}-L-asparaginyl-[protein] + UDP + H(+). It functions in the pathway protein modification; protein glycosylation. In terms of biological role, glycosyltransferase that catalyzes the transfer of GlcNAc to the Manalpha1-6 arm to form GlcNAcBeta1-4Manalpha1-6 linkage (also named 'GnT-VI' activity). May also participate in the transfer of N-acetylglucosamine (GlcNAc) to the core mannose residues of N-linked glycans by catalyzing the formation of the GlcNAcbeta1-4 branch on the GlcNAcbeta1-2Manalpha1-3 arm of the core structure of N-linked glycans. The sequence is that of Alpha-1,6-mannosyl-glycoprotein 4-beta-N-acetylglucosaminyltransferase (MGAT4C) from Gallus gallus (Chicken).